A 272-amino-acid chain; its full sequence is tRNA pseudouridine synthase A (272 aa).

D52 acts as the Nucleophile in catalysis. Residue Y110 participates in substrate binding.

This sequence belongs to the tRNA pseudouridine synthase TruA family. In terms of assembly, homodimer.

It catalyses the reaction uridine(38/39/40) in tRNA = pseudouridine(38/39/40) in tRNA. Formation of pseudouridine at positions 38, 39 and 40 in the anticodon stem and loop of transfer RNAs. The chain is tRNA pseudouridine synthase A from Cupriavidus necator (strain ATCC 17699 / DSM 428 / KCTC 22496 / NCIMB 10442 / H16 / Stanier 337) (Ralstonia eutropha).